The following is a 153-amino-acid chain: MYAVVQVRGVVKTNHEIKDTLKMLRLHHVNHCVLVPDTPAYLGMIRKVKDFVAYGEVDKDTLATLLRTRGRLTGDEKLTDEYVRAHTPYADIDEFAAALCDGEMSFRDLVEIKPVLRLHPPRKGYKTIKRTFQQGGALGYYGPQINDLLYKMR.

It belongs to the universal ribosomal protein uL30 family. In terms of assembly, part of the 50S ribosomal subunit.

This is Large ribosomal subunit protein uL30 from Methanoculleus marisnigri (strain ATCC 35101 / DSM 1498 / JR1).